Reading from the N-terminus, the 355-residue chain is Ataxin-3 (355 aa).

Methionine 1 participates in a covalent cross-link: Peptide (Met-Gly) (interchain with G-Cter in ubiquitin). The 180-residue stretch at 1–180 (MESIFHEKQE…DCEADQLLQM (180 aa)) folds into the Josephin domain. Cysteine 14 functions as the Nucleophile in the catalytic mechanism. Catalysis depends on histidine 119, which acts as the Proton acceptor. Asparagine 134 is an active-site residue. A Glycyl lysine isopeptide (Lys-Gly) (interchain with G-Cter in ubiquitin) cross-link involves residue lysine 200. Residue serine 219 is modified to Phosphoserine. UIM domains lie at 224 to 243 (EDED…IDME) and 244 to 263 (DEEA…SSRS). Residues 257-275 (MQGSSRSMCENSPQTSSPD) are compositionally biased toward polar residues. The tract at residues 257–355 (MQGSSRSMCE…KDNLKAERKK (99 aa)) is disordered. Phosphoserine is present on residues serine 268, serine 272, and serine 273. A compositionally biased stretch (basic and acidic residues) spans 279 to 289 (EELRRRREAYF). At serine 321 the chain carries Phosphoserine. One can recognise a UIM 3 domain in the interval 329-348 (SEEDMLRAAVTMSLETAKDN). Basic and acidic residues predominate over residues 344-355 (TAKDNLKAERKK).

As to quaternary structure, interacts with STUB1/CHIP (when monoubiquitinated). Interacts with DNA repair proteins RAD23A and RAD23B. Interacts with BECN1 (via its poly-Gln domain). Interacts with PRKN, UBR2, VCP and tubulin. Monoubiquitinated by UBE2W, possibly leading to activate the deubiquitinating enzyme activity.

It is found in the nucleus matrix. The protein localises to the nucleus. Its subcellular location is the lysosome membrane. The catalysed reaction is Thiol-dependent hydrolysis of ester, thioester, amide, peptide and isopeptide bonds formed by the C-terminal Gly of ubiquitin (a 76-residue protein attached to proteins as an intracellular targeting signal).. Deubiquitinating enzyme involved in protein homeostasis maintenance, transcription, cytoskeleton regulation, myogenesis and degradation of misfolded chaperone substrates. Binds long polyubiquitin chains and trims them, while it has weak or no activity against chains of 4 or less ubiquitins. Involved in degradation of misfolded chaperone substrates via its interaction with STUB1/CHIP: recruited to monoubiquitinated STUB1/CHIP, and restricts the length of ubiquitin chain attached to STUB1/CHIP substrates and preventing further chain extension. Interacts with key regulators of transcription and represses transcription: acts as a histone-binding protein that regulates transcription. Acts as a negative regulator of mTORC1 signaling in response to amino acid deprivation by mediating deubiquitination of RHEB, thereby promoting RHEB inactivation by the TSC-TBC complex. Regulates autophagy via the deubiquitination of 'Lys-402' of BECN1 leading to the stabilization of BECN1. This Mus musculus (Mouse) protein is Ataxin-3 (Atxn3).